Reading from the N-terminus, the 26-residue chain is Delta-hemolysin (26 aa).

Met-1 carries the post-translational modification N-formylmethionine.

Belongs to the delta-lysin family.

The protein resides in the secreted. The protein localises to the host cell membrane. Lyses erythrocytes and many other mammalian cells. The chain is Delta-hemolysin (hld) from Staphylococcus aureus (strain Mu50 / ATCC 700699).